Consider the following 164-residue polypeptide: Phosphopantetheine adenylyltransferase (164 aa).

Ser-9 contacts substrate. Residues 9–10 and His-17 contribute to the ATP site; that span reads SF. Substrate is bound by residues Lys-41, Leu-73, and Lys-87. ATP contacts are provided by residues 88–90, Glu-98, and 123–129; these read GLR and YSYLSSS.

This sequence belongs to the bacterial CoaD family. In terms of assembly, homohexamer. It depends on Mg(2+) as a cofactor.

Its subcellular location is the cytoplasm. It carries out the reaction (R)-4'-phosphopantetheine + ATP + H(+) = 3'-dephospho-CoA + diphosphate. Its pathway is cofactor biosynthesis; coenzyme A biosynthesis; CoA from (R)-pantothenate: step 4/5. Functionally, reversibly transfers an adenylyl group from ATP to 4'-phosphopantetheine, yielding dephospho-CoA (dPCoA) and pyrophosphate. This chain is Phosphopantetheine adenylyltransferase, found in Clostridium botulinum (strain ATCC 19397 / Type A).